Here is a 384-residue protein sequence, read N- to C-terminus: Chaperone protein DnaJ (384 aa).

A J domain is found at 4-68; it reads DFYEILGVSR…EKRQMYDQMG (65 aa). Disordered stretches follow at residues 29-60 and 73-131; these read REYHPDVSDDPDAEEKFKQAKKAKEVLTDEEK and EQAE…GQDL. The segment covering 42–60 has biased composition (basic and acidic residues); the sequence is EEKFKQAKKAKEVLTDEEK. The segment covering 80 to 101 has biased composition (gly residues); sequence GAGGGGGRGGMGGDPFGGGAGG. Residues 102 to 111 are compositionally biased toward low complexity; that stretch reads FDMQDIFDQF. Gly residues predominate over residues 112–121; that stretch reads FGGGGRGGRG. The CR-type zinc finger occupies 145-227; sequence GATKQLNVTR…CRGNGVVQND (83 aa). Positions 158, 161, 175, and 178 each coordinate Zn(2+). CXXCXGXG motif repeat units follow at residues 158–165, 175–182, 201–208, and 215–222; these read CDDCDGAG, CPECNGQG, CRRCDGEG, and CSTCRGNG. Positions 160 to 191 are disordered; that stretch reads DCDGAGHPPGADSETCPECNGQGQTTQVQQTP. Low complexity predominate over residues 180-190; it reads GQGQTTQVQQT. Zn(2+) is bound by residues Cys-201, Cys-204, Cys-215, and Cys-218.

This sequence belongs to the DnaJ family. In terms of assembly, homodimer. Zn(2+) serves as cofactor.

It is found in the cytoplasm. Functionally, participates actively in the response to hyperosmotic and heat shock by preventing the aggregation of stress-denatured proteins and by disaggregating proteins, also in an autonomous, DnaK-independent fashion. Unfolded proteins bind initially to DnaJ; upon interaction with the DnaJ-bound protein, DnaK hydrolyzes its bound ATP, resulting in the formation of a stable complex. GrpE releases ADP from DnaK; ATP binding to DnaK triggers the release of the substrate protein, thus completing the reaction cycle. Several rounds of ATP-dependent interactions between DnaJ, DnaK and GrpE are required for fully efficient folding. Also involved, together with DnaK and GrpE, in the DNA replication of plasmids through activation of initiation proteins. In Haloarcula marismortui (strain ATCC 43049 / DSM 3752 / JCM 8966 / VKM B-1809) (Halobacterium marismortui), this protein is Chaperone protein DnaJ.